The chain runs to 292 residues: 31 kDa ribonucleoprotein, chloroplastic (292 aa).

The RRM 1 domain occupies 88 to 166 (LKLFVGNLPF…RAIRVNAGPA (79 aa)). Residues 165 to 203 (PAPAKRENSSFGGGRGGNSSYGGGRDGNSSFGGARGGRS) are disordered. The segment at 167-207 (PAKRENSSFGGGRGGNSSYGGGRDGNSSFGGARGGRSVDSS) is linker (Gly-rich). The segment covering 175 to 190 (FGGGRGGNSSYGGGRD) has biased composition (gly residues). The 79-residue stretch at 208–286 (NRVYVGNLSW…RSIRVSAAEE (79 aa)) folds into the RRM 2 domain.

As to expression, expressed at high levels in the leaves and seedlings, and lower levels are seen in the stems and roots.

Its subcellular location is the plastid. The protein resides in the chloroplast. In Nicotiana plumbaginifolia (Leadwort-leaved tobacco), this protein is 31 kDa ribonucleoprotein, chloroplastic.